We begin with the raw amino-acid sequence, 331 residues long: NADH-quinone oxidoreductase subunit H (331 aa).

9 helical membrane-spanning segments follow: residues 6–26 (FFIVETIIKAVVILSVIATLA), 45–65 (GPWMVGPAGVLQIVADMIKLF), 78–98 (FIFLIAPIISASCAFVAMSVI), 120–140 (IGILFLLSVSGTCVYGTLIGG), 167–187 (GLSLIPVIMMVGSLSLIDIVH), 193–213 (ITSWFLIKQPVCFVLFTIAAF), 241–261 (MRWGMFFIGEYANMITYSIVI), 263–283 (LIFLGGFNSFWFIPGSLMIFL), and 311–331 (CWKICMPIALICIFVTAFVII).

It belongs to the complex I subunit 1 family. As to quaternary structure, NDH-1 is composed of 14 different subunits. Subunits NuoA, H, J, K, L, M, N constitute the membrane sector of the complex.

Its subcellular location is the cell inner membrane. The catalysed reaction is a quinone + NADH + 5 H(+)(in) = a quinol + NAD(+) + 4 H(+)(out). Its function is as follows. NDH-1 shuttles electrons from NADH, via FMN and iron-sulfur (Fe-S) centers, to quinones in the respiratory chain. The immediate electron acceptor for the enzyme in this species is believed to be ubiquinone. Couples the redox reaction to proton translocation (for every two electrons transferred, four hydrogen ions are translocated across the cytoplasmic membrane), and thus conserves the redox energy in a proton gradient. This subunit may bind ubiquinone. The polypeptide is NADH-quinone oxidoreductase subunit H (Campylobacter hominis (strain ATCC BAA-381 / DSM 21671 / CCUG 45161 / LMG 19568 / NCTC 13146 / CH001A)).